The primary structure comprises 2287 residues: Serine/threonine-protein kinase MEC1 (2287 aa).

The 555-residue stretch at 1310 to 1864 (TLAKKSLETD…LWYISILLNS (555 aa)) folds into the FAT domain. Residues 1968-2271 (FSSQYMVFNS…QVEALTQESC (304 aa)) enclose the PI3K/PI4K catalytic domain. Residues 1974 to 1980 (VFNSLKK) form a G-loop region. Residues 2140 to 2148 (GLGDRHCEN) form a catalytic loop region. The interval 2160–2184 (HVDFDCLFEKGKKLPVPEIVPFRLT) is activation loop. Positions 2255–2287 (LALSVSGQVEALTQESCSVENLSKMYIGWLPFW) constitute an FATC domain.

The protein belongs to the PI3/PI4-kinase family. ATM subfamily.

Its subcellular location is the nucleus. It catalyses the reaction L-seryl-[protein] + ATP = O-phospho-L-seryl-[protein] + ADP + H(+). The catalysed reaction is L-threonyl-[protein] + ATP = O-phospho-L-threonyl-[protein] + ADP + H(+). Its function is as follows. Serine/threonine protein kinase which activates checkpoint signaling upon genotoxic stresses such as ionizing radiation (IR), ultraviolet light (UV), or DNA replication stalling, thereby acting as a DNA damage sensor. Recognizes the substrate consensus sequence [ST]-Q. Recruited to DNA lesions in order to initiate the DNA repair by homologous recombination. Phosphorylates histone H2A to form H2AS128ph (gamma-H2A) at sites of DNA damage, also involved in the regulation of DNA damage response mechanism. Required for cell growth and meiotic recombination. This chain is Serine/threonine-protein kinase MEC1 (MEC1), found in Kluyveromyces lactis (strain ATCC 8585 / CBS 2359 / DSM 70799 / NBRC 1267 / NRRL Y-1140 / WM37) (Yeast).